We begin with the raw amino-acid sequence, 574 residues long: Uric acid-xanthine permease (574 aa).

A disordered region spans residues 1-20 (MDNSIHSTDGPDSVIPNSNP). Transmembrane regions (helical) follow at residues 77 to 97 (LLAFILGLQHALAMLAGVVTP), 111 to 131 (LQQYLVSTSLIVCGLLSMVQI), 141 to 161 (YYIGSGVLSVMGVSFSIISVA), 188 to 209 (AYGALIGTSACCALVEILLAFV), 217 to 237 (IFPPIVTGPTVMLIGISLIGT), 264 to 284 (LPWGSPEFIGLGFLVFVSIIL), 296 to 315 (CSVVIGLLVGCIVAAACGYF), 338 to 361 (VYGPMVLPIIAVFIICACECIGDV), 427 to 447 (CCLILIVAGIFAKFAAAIVAI), 451 to 471 (VMGGMKTFLFASVVISGQAIV), 482 to 502 (FILTASMALGYGATLVPTWFG), and 522 to 542 (LVLETGFAVTAFVAMLLNAIM). The disordered stretch occupies residues 555–574 (MPVSAHDNRDGEAEYQSKQA). Lys572 is covalently cross-linked (Glycyl lysine isopeptide (Lys-Gly) (interchain with G-Cter in ubiquitin)).

Belongs to the nucleobase:cation symporter-2 (NCS2) (TC 2.A.40) family. Post-translationally, ubiquitinated by hulA. Ubiquitination leads to internalization, sorting into the endosomal pathway to the vacuolar lumen where uapA is eventually degraded.

It localises to the cell membrane. Its function is as follows. Uric acid-xanthine transporter. This Emericella nidulans (strain FGSC A4 / ATCC 38163 / CBS 112.46 / NRRL 194 / M139) (Aspergillus nidulans) protein is Uric acid-xanthine permease (uapA).